Here is a 122-residue protein sequence, read N- to C-terminus: uncharacterized protein (122 aa).

Residues 1 to 10 (MGTGLRSQSL) are compositionally biased toward polar residues. A disordered region spans residues 1 to 68 (MGTGLRSQSL…GQEWLPGSLG (68 aa)). A compositionally biased stretch (basic and acidic residues) spans 40–56 (QGREKSRSSDGGPERLD).

This is an uncharacterized protein from Bos taurus (Bovine).